Here is a 384-residue protein sequence, read N- to C-terminus: Carbamoyl phosphate synthase small chain (384 aa).

The segment at 1-189 (MSKSALLVLE…GLPEAKDDSE (189 aa)) is CPSase. Ser-47, Gly-241, and Gly-243 together coordinate L-glutamine. Residues 193-380 (HVVAYDFGAK…IELIKLSVNE (188 aa)) enclose the Glutamine amidotransferase type-1 domain. The active-site Nucleophile is the Cys-269. L-glutamine contacts are provided by Leu-270, Gln-273, Asn-311, Gly-313, and Phe-314. Active-site residues include His-353 and Glu-355.

The protein belongs to the CarA family. As to quaternary structure, composed of two chains; the small (or glutamine) chain promotes the hydrolysis of glutamine to ammonia, which is used by the large (or ammonia) chain to synthesize carbamoyl phosphate. Tetramer of heterodimers (alpha,beta)4.

The enzyme catalyses hydrogencarbonate + L-glutamine + 2 ATP + H2O = carbamoyl phosphate + L-glutamate + 2 ADP + phosphate + 2 H(+). It carries out the reaction L-glutamine + H2O = L-glutamate + NH4(+). The protein operates within amino-acid biosynthesis; L-arginine biosynthesis; carbamoyl phosphate from bicarbonate: step 1/1. It functions in the pathway pyrimidine metabolism; UMP biosynthesis via de novo pathway; (S)-dihydroorotate from bicarbonate: step 1/3. Its function is as follows. Small subunit of the glutamine-dependent carbamoyl phosphate synthetase (CPSase). CPSase catalyzes the formation of carbamoyl phosphate from the ammonia moiety of glutamine, carbonate, and phosphate donated by ATP, constituting the first step of 2 biosynthetic pathways, one leading to arginine and/or urea and the other to pyrimidine nucleotides. The small subunit (glutamine amidotransferase) binds and cleaves glutamine to supply the large subunit with the substrate ammonia. This chain is Carbamoyl phosphate synthase small chain, found in Photobacterium profundum (strain SS9).